We begin with the raw amino-acid sequence, 377 residues long: 8-amino-7-oxononanoate synthase (377 aa).

Arg-13 provides a ligand contact to substrate. 100–101 (GY) provides a ligand contact to pyridoxal 5'-phosphate. His-125 is a substrate binding site. Positions 171, 199, and 228 each coordinate pyridoxal 5'-phosphate. At Lys-231 the chain carries N6-(pyridoxal phosphate)lysine. Thr-345 is a binding site for substrate.

Belongs to the class-II pyridoxal-phosphate-dependent aminotransferase family. BioF subfamily. Homodimer. The cofactor is pyridoxal 5'-phosphate.

It catalyses the reaction 6-carboxyhexanoyl-[ACP] + L-alanine + H(+) = (8S)-8-amino-7-oxononanoate + holo-[ACP] + CO2. Its pathway is cofactor biosynthesis; biotin biosynthesis. In terms of biological role, catalyzes the decarboxylative condensation of pimeloyl-[acyl-carrier protein] and L-alanine to produce 8-amino-7-oxononanoate (AON), [acyl-carrier protein], and carbon dioxide. This chain is 8-amino-7-oxononanoate synthase, found in Nitrosococcus oceani (strain ATCC 19707 / BCRC 17464 / JCM 30415 / NCIMB 11848 / C-107).